The sequence spans 135 residues: Small ribosomal subunit protein uS11 (135 aa).

A compositionally biased stretch (low complexity) spans 1 to 11 (MPPKARAGAAV). Positions 1-22 (MPPKARAGAAVKKVRRKERKNV) are disordered.

This sequence belongs to the universal ribosomal protein uS11 family. In terms of assembly, part of the 30S ribosomal subunit. Interacts with proteins S7 and S18. Binds to IF-3.

In terms of biological role, located on the platform of the 30S subunit, it bridges several disparate RNA helices of the 16S rRNA. Forms part of the Shine-Dalgarno cleft in the 70S ribosome. This Salinispora tropica (strain ATCC BAA-916 / DSM 44818 / JCM 13857 / NBRC 105044 / CNB-440) protein is Small ribosomal subunit protein uS11.